A 304-amino-acid chain; its full sequence is D-alanine--D-alanine ligase (304 aa).

In terms of domain architecture, ATP-grasp spans 107 to 300 (KRLWQGSGLP…FDELVARILG (194 aa)). Position 134-186 (134-186 (VGYPVIVKPAREGSSLGMSRVEGPEELAEAYRVAAAYDDTVLAEAWVEGEEYT)) interacts with ATP. The Mg(2+) site is built by D254, E267, and N269.

This sequence belongs to the D-alanine--D-alanine ligase family. Mg(2+) is required as a cofactor. The cofactor is Mn(2+).

The protein resides in the cytoplasm. It carries out the reaction 2 D-alanine + ATP = D-alanyl-D-alanine + ADP + phosphate + H(+). The protein operates within cell wall biogenesis; peptidoglycan biosynthesis. Functionally, cell wall formation. This chain is D-alanine--D-alanine ligase, found in Halorhodospira halophila (strain DSM 244 / SL1) (Ectothiorhodospira halophila (strain DSM 244 / SL1)).